A 515-amino-acid chain; its full sequence is Signal transduction histidine-protein kinase/phosphatase MprB (515 aa).

At 1–24 the chain is on the cytoplasmic side; that stretch reads MTLPPPPSRLKPPRNTSSLSLRWR. The chain crosses the membrane as a helical span at residues 25–45; that stretch reads VMLLAMSMVAMVVVLMSVAVY. Topologically, residues 46-165 are extracellular; that stretch reads AVVSRALYDD…TGQVLGRLGT (120 aa). A helical membrane pass occupies residues 166-186; it reads VLLIVGGVGVAVAAIAGGMVA. The HAMP domain occupies 187–239; it reads RAGLRPVGRLTQAAERVARTDDLRPIPVFGSDELARLTEAFNMMLRALTESRE. Topologically, residues 187 to 515 are cytoplasmic; sequence RAGLRPVGRL…GKSRSASKEL (329 aa). The Histidine kinase domain occupies 247-467; it reads DAGHELRTPL…SFYVMLPGRP (221 aa). His-250 is modified (phosphohistidine; by autocatalysis). The tract at residues 468-515 is disordered; that stretch reads LTPGGNGTAPVPAAQFDPDMRSAGSRADRRVIKNTETNGKSRSASKEL.

Mg(2+) is required as a cofactor. It depends on Mn(2+) as a cofactor. Autophosphorylated.

Its subcellular location is the cell membrane. It carries out the reaction ATP + protein L-histidine = ADP + protein N-phospho-L-histidine.. In terms of biological role, member of the two-component regulatory system MprB/MprA which contributes to maintaining a balance among several systems involved in stress resistance and is required for establishment and maintenance of persistent infection in the host. In response to environmental signals MprB acts both as a membrane-associated protein kinase that undergoes autophosphorylation and subsequently transfers the phosphate to MprA, and a protein phosphatase that dephosphorylates phospho-MprA. The sequence is that of Signal transduction histidine-protein kinase/phosphatase MprB (mprB) from Mycobacterium sp. (strain KMS).